A 429-amino-acid polypeptide reads, in one-letter code: Adenylosuccinate synthetase (429 aa).

GTP-binding positions include 12–18 (GDEGKGK) and 40–42 (GHT). D13 (proton acceptor) is an active-site residue. Positions 13 and 40 each coordinate Mg(2+). Residues 13–16 (DEGK), 38–41 (NAGH), T128, R142, Q223, T238, and R302 contribute to the IMP site. Catalysis depends on H41, which acts as the Proton donor. 298-304 (TTTGRPR) is a binding site for substrate. Residues R304, 330 to 332 (SID), and 412 to 414 (SVG) each bind GTP.

Belongs to the adenylosuccinate synthetase family. In terms of assembly, homodimer. Mg(2+) is required as a cofactor.

It is found in the cytoplasm. It carries out the reaction IMP + L-aspartate + GTP = N(6)-(1,2-dicarboxyethyl)-AMP + GDP + phosphate + 2 H(+). The protein operates within purine metabolism; AMP biosynthesis via de novo pathway; AMP from IMP: step 1/2. Its function is as follows. Plays an important role in the de novo pathway of purine nucleotide biosynthesis. Catalyzes the first committed step in the biosynthesis of AMP from IMP. The sequence is that of Adenylosuccinate synthetase from Bacillus cereus (strain ATCC 14579 / DSM 31 / CCUG 7414 / JCM 2152 / NBRC 15305 / NCIMB 9373 / NCTC 2599 / NRRL B-3711).